Reading from the N-terminus, the 126-residue chain is Holo-[acyl-carrier-protein] synthase (126 aa).

D9 and E58 together coordinate Mg(2+).

It belongs to the P-Pant transferase superfamily. AcpS family. The cofactor is Mg(2+).

The protein localises to the cytoplasm. The enzyme catalyses apo-[ACP] + CoA = holo-[ACP] + adenosine 3',5'-bisphosphate + H(+). Its function is as follows. Transfers the 4'-phosphopantetheine moiety from coenzyme A to a Ser of acyl-carrier-protein. The polypeptide is Holo-[acyl-carrier-protein] synthase (Salmonella paratyphi B (strain ATCC BAA-1250 / SPB7)).